The primary structure comprises 193 residues: Large ribosomal subunit protein uL18 (193 aa).

It belongs to the universal ribosomal protein uL18 family. In terms of assembly, part of the 50S ribosomal subunit. Contacts the 5S and 23S rRNAs.

Functionally, this is one of the proteins that bind and probably mediate the attachment of the 5S RNA into the large ribosomal subunit, where it forms part of the central protuberance. The protein is Large ribosomal subunit protein uL18 of Methanococcus maripaludis (strain DSM 14266 / JCM 13030 / NBRC 101832 / S2 / LL).